The following is a 260-amino-acid chain: Carbonic anhydrase 3 (260 aa).

A2 is subject to N-acetylalanine. Residues 3–259 (KEWGYASHNG…IKGRVVRASF (257 aa)) form the Alpha-carbonic anhydrase domain. Residues S29, S43, S48, S50, and S55 each carry the phosphoserine modification. An involved in proton transfer region spans residues 64-67 (KTCR). A Phosphothreonine modification is found at T73. Residues H94, H96, and H119 each contribute to the Zn(2+) site. Residue Y127 is modified to Phosphotyrosine. T129 is subject to Phosphothreonine. An S-glutathionyl cysteine mark is found at C182 and C187. 198–199 (TT) lines the substrate pocket. T216 carries the phosphothreonine modification. S219 carries the phosphoserine modification.

It belongs to the alpha-carbonic anhydrase family. Requires Zn(2+) as cofactor. S-thiolated both by thiol-disulfide exchange with glutathione disulfide and by oxyradical-initiated S-thiolation with reduced glutathione. Post-translationally, S-glutathionylated in hepatocytes under oxidative stress. Expressed in liver and muscle.

It localises to the cytoplasm. It catalyses the reaction hydrogencarbonate + H(+) = CO2 + H2O. Its activity is regulated as follows. Inhibited by acetazolamide. Its function is as follows. Reversible hydration of carbon dioxide. The chain is Carbonic anhydrase 3 (Ca3) from Rattus norvegicus (Rat).